We begin with the raw amino-acid sequence, 264 residues long: Thymidylate synthase (264 aa).

Position 21 (Arg21) interacts with dUMP. Residue His51 participates in (6R)-5,10-methylene-5,6,7,8-tetrahydrofolate binding. Residue 126-127 participates in dUMP binding; that stretch reads RR. Cys146 functions as the Nucleophile in the catalytic mechanism. Residues 166–169, Asn177, and 207–209 each bind dUMP; these read RSCD and HLY. Asp169 lines the (6R)-5,10-methylene-5,6,7,8-tetrahydrofolate pocket. Residue Ala263 participates in (6R)-5,10-methylene-5,6,7,8-tetrahydrofolate binding.

Belongs to the thymidylate synthase family. Bacterial-type ThyA subfamily. Homodimer.

Its subcellular location is the cytoplasm. It catalyses the reaction dUMP + (6R)-5,10-methylene-5,6,7,8-tetrahydrofolate = 7,8-dihydrofolate + dTMP. Its pathway is pyrimidine metabolism; dTTP biosynthesis. Its function is as follows. Catalyzes the reductive methylation of 2'-deoxyuridine-5'-monophosphate (dUMP) to 2'-deoxythymidine-5'-monophosphate (dTMP) while utilizing 5,10-methylenetetrahydrofolate (mTHF) as the methyl donor and reductant in the reaction, yielding dihydrofolate (DHF) as a by-product. This enzymatic reaction provides an intracellular de novo source of dTMP, an essential precursor for DNA biosynthesis. The protein is Thymidylate synthase of Yersinia pseudotuberculosis serotype O:1b (strain IP 31758).